A 469-amino-acid chain; its full sequence is Transcription factor E2FB (469 aa).

Disordered regions lie at residues 1–28 and 84–118; these read MSEE…PPLV and QTPV…AGSP. Composition is skewed to polar residues over residues 8–22 and 100–118; these read QFPS…SLSS and SAKS…AGSP. The DNA-binding element occupies 129 to 194; it reads RYDSSLGLLT…TLKNRIQWKG (66 aa). The stretch at 202-246 forms a coiled coil; it reads ETIESIANLQDEVQNLAAEEARLDDQIRESQERLTSLSEDENNKR. Residues 210–238 are leucine-zipper; the sequence is LQDEVQNLAAEEARLDDQIRESQERLTSL. The interval 319–374 is disordered; it reads PQADEPSNVPDEPSNVPDVPSNLPSTSGLPENHDVSMPMKEESTERNMETQEVDDT. A compositionally biased stretch (basic and acidic residues) spans 349-374; it reads ENHDVSMPMKEESTERNMETQEVDDT. Residues 403–419 form a retinoblastoma protein binding region; the sequence is DYWFRSEVGEVSITDMW. Residues 426 to 469 are disordered; sequence DWNQMITFDQDHAGPSDNKILEQPQTPSSPTPEESTATRSPTGS. Residues 447 to 469 show a composition bias toward low complexity; it reads EQPQTPSSPTPEESTATRSPTGS.

It belongs to the E2F/DP family. As to quaternary structure, heterodimer with DP proteins. Interacts (via dimerization domain) preferentially with DPA, but also with DPB. Interacts with PURA1 and retinoblastoma-related protein RBR1. Component of a DREAM-like complex which modulates a variety of developmentally regulated genes and of the mitotic genes in proliferating and differentiated cells. Interacts with MYB3R4 only at early stages of leaves development. Post-translationally, phosphorylated. Expressed in proliferating cells and several differentiated tissues. Detected in inflorescence and shoot apical meristems, cotyledonary vascular tissues, leaf primordia, young leaves, base of trichomes, central cylinder and elongation zone of roots, lateral root primordia, flowers, pistils of immature flowers and pollen grains.

It is found in the cytoplasm. It localises to the nucleus. Its function is as follows. Transcription activator that binds DNA cooperatively with DP proteins through the E2 recognition site, 5'-TTTC[CG]CGC-3' found in the promoter region of a number of genes whose products are involved in cell cycle regulation or in DNA replication. The binding of retinoblastoma-related proteins represses transactivation. Involved in the control of cell-cycle progression from G1 to S phase and from G2 to M phase. Stimulates cell proliferation and delays differentiation. Represses cell enlargement and endoreduplication in auxin-free conditions. This is Transcription factor E2FB (E2FB) from Arabidopsis thaliana (Mouse-ear cress).